Here is a 1620-residue protein sequence, read N- to C-terminus: Myb-like protein X (1620 aa).

Polar residues predominate over residues Met1 to Asn13. 4 disordered regions span residues Met1–Thr57, Thr176–Gly204, Phe294–Glu318, and Lys450–Ala849. A compositionally biased stretch (low complexity) spans Pro28–Thr57. The span at Gly177 to Gly187 shows a compositional bias: gly residues. The 112-residue stretch at Gly310–Asn421 folds into the SWIRM domain. Basic and acidic residues predominate over residues Lys450–Lys497. The segment covering Glu498 to Glu511 has biased composition (acidic residues). The span at Lys512–Thr568 shows a compositional bias: basic and acidic residues. Over residues Asp570–Ser598 the composition is skewed to low complexity. Positions Lys606–Lys628 are enriched in basic and acidic residues. The segment covering Glu629–Ser645 has biased composition (low complexity). Residues Glu647–Asn798 show a composition bias toward basic and acidic residues. Residues Glu799–Asp834 show a composition bias toward acidic residues. Positions Pro925–Glu977 constitute an SANT domain. The segment at Gln1049 to Thr1506 is disordered. Basic and acidic residues-rich tracts occupy residues Ser1051–Asp1195, Glu1219–Asn1255, and His1264–Leu1302. The segment covering Asn1303–Asn1325 has biased composition (low complexity). The span at Thr1338–Asp1350 shows a compositional bias: polar residues. Composition is skewed to low complexity over residues Thr1358 to Thr1382 and Asn1390 to Asn1416. Acidic residues-rich tracts occupy residues Glu1467–Leu1481 and Val1493–Met1504.

Its subcellular location is the nucleus. The sequence is that of Myb-like protein X (mybX) from Dictyostelium discoideum (Social amoeba).